Reading from the N-terminus, the 226-residue chain is Chalcone--flavanone isomerase 2-A (226 aa).

Substrate-binding residues include Thr49, Asn114, and Ser191.

The protein belongs to the chalcone isomerase family. Mostly expressed in flowers, and, to a lower extent, in roots, shoots, and seeds.

The enzyme catalyses a chalcone = a flavanone.. Its pathway is secondary metabolite biosynthesis; flavonoid biosynthesis. Catalyzes the intramolecular cyclization of bicyclic chalcones into tricyclic (S)-flavanones. Responsible for the isomerization of 4,2',4',6'-tetrahydroxychalcone (also termed chalcone) into naringenin. The sequence is that of Chalcone--flavanone isomerase 2-A (CHI2-A) from Glycine max (Soybean).